Reading from the N-terminus, the 393-residue chain is Protein TsgA (393 aa).

12 consecutive transmembrane segments (helical) span residues 11 to 31, 51 to 71, 78 to 98, 101 to 121, 134 to 154, 162 to 182, 206 to 226, 245 to 265, 273 to 293, 298 to 318, 332 to 352, and 361 to 381; these read WISF…GMVM, FLNA…EIVP, FGFI…SLAL, AAMF…TFLI, LLFT…VAAF, WYWV…LTFG, IGVL…LGFI, ALVS…SFIL, ILTV…TGTQ, WFIL…ITLG, FILT…GPIV, and LLTA…LGFV.

The protein belongs to the major facilitator superfamily. TsgA family.

The protein resides in the cell inner membrane. This Salmonella arizonae (strain ATCC BAA-731 / CDC346-86 / RSK2980) protein is Protein TsgA.